The primary structure comprises 422 residues: MEYNTILNNTSKTRVCYFFDQDVGNYFYGPYHPMKPHRLCLTNNLVLNYGLHKKMHLYKARPADAEDMLKFHSEDYVDFLERVTPENINEWKDVKRFHIGEDCPVFPGLYDYCSIYSGGSIEGALKLNHRMYDIAINWSGGLHHARKDEASGFCYVNDIVLAILELLKFHARVLYIDIDVHHGDGVQEAFYLTDRVMTVSFHKFGGDFFPGTGDIDEIGAKTGKLYSVNVPLADGIDDKNYLNIFKPVIQGVMDYYRPSVIVLQCGADSLRFDRLGCFNLTIKGHAECVRFVKSFNIPTLVLGGGGYTVRNVARCWTYETSVCVDTEVNNELPYNDYIQFYSPDFQLIPDYTGLPFKYENANTKSYLESLRIKILENLRILQWAPSVQIQDVPPDIMPIDFDRDEDSKENMDKRKKKHNDFS.

Substrate is bound at residue aspartate 102. Catalysis depends on histidine 144, which acts as the Proton acceptor. Glycine 152 is a substrate binding site. A divalent metal cation contacts are provided by aspartate 179, histidine 181, and aspartate 268. Tyrosine 307 lines the substrate pocket. Residues 399–422 (IDFDRDEDSKENMDKRKKKHNDFS) are disordered. Residues 413 to 422 (KRKKKHNDFS) are compositionally biased toward basic residues.

Belongs to the histone deacetylase family. HD type 1 subfamily.

It is found in the nucleus. It localises to the cytoplasm. The enzyme catalyses N(6)-acetyl-L-lysyl-[histone] + H2O = L-lysyl-[histone] + acetate. With respect to regulation, its activity is inhibited by trichostatin A (TSA), a well known histone deacetylase inhibitor. Cytosolic activity is refractory to inhibition by TSA, while the nuclear activity is inhibited completely. Its function is as follows. Responsible for the deacetylation of lysine residues on the N-terminal part of the core histones (H2A, H2B, H3 and H4). Histone deacetylation plays an important role in transcriptional regulation, cell cycle progression and developmental events. Histone deacetylases act via the formation of large multiprotein complexes. May play a role in the regulation of the timing of gene expression during the development and in the definition aspects of the phenotype that mediate social behavior in genetically heterogeneous groups. In Dictyostelium discoideum (Social amoeba), this protein is Histone deacetylase B (hdaB).